Consider the following 434-residue polypeptide: MAAAAGSCARVAAWGGKLRRGLAVSRQAVRSPGPLAAAVAGAALAGAGAAWHHSRVSVAARDGSFTVSAQKNVEHGIIYIGKPSLRKQRFMQFSSLEHEGEYYMTPRDFLFSVMFEQMERKTSVKKLTKKDIEDTLSGIQTAGCGSTFFRDLGDKGLISYTEYLFLLTILTKPHSGFHVAFKMLDTDGNEMIEKREFFKLQKIISKQDDLMTVKTNETGYQEAIVKEPEINTTLQMRFFGKRGQRKLHYKEFRRFMENLQTEIQEMEFLQFSKGLSFMRKEDFAEWLLFFTNTENKDIYWKNVREKLSAGESISLDEFKSFCHFTTHLEDFAIAMQMFSLAHRPVRLAEFKRAVKVATGQELSNNILDTVFKIFDLDGDECLSHEEFLGVLKNRMHRGLWVPQHQSIQEYWKCVKKESIKGVKEVWKQAGKGLF.

Residues 1 to 22 (MAAAAGSCARVAAWGGKLRRGL) constitute a mitochondrion transit peptide. Positions 172-207 (KPHSGFHVAFKMLDTDGNEMIEKREFFKLQKIISKQ) constitute an EF-hand 1 domain. Ca(2+)-binding residues include aspartate 185, aspartate 187, asparagine 189, methionine 191, glutamate 193, and glutamate 196. Serine 205 carries the post-translational modification Phosphoserine. The 36-residue stretch at 227 to 262 (EPEINTTLQMRFFGKRGQRKLHYKEFRRFMENLQTE) folds into the EF-hand 2; degenerate domain. One can recognise an EF-hand 3; degenerate domain in the interval 293–328 (TENKDIYWKNVREKLSAGESISLDEFKSFCHFTTHL). The region spanning 362 to 397 (LSNNILDTVFKIFDLDGDECLSHEEFLGVLKNRMHR) is the EF-hand 4 domain. Residues aspartate 375, aspartate 377, aspartate 379, cysteine 381, and glutamate 386 each coordinate Ca(2+).

The protein belongs to the MICU1 family. MICU2 subfamily. As to quaternary structure, heterodimer; disulfide-linked; heterodimerizes with MICU1. Component of the uniplex complex, composed of MCU, EMRE/SMDT1, MICU1 and MICU2 in a 4:4:1:1 stoichiometry.

It is found in the mitochondrion intermembrane space. The protein localises to the mitochondrion inner membrane. Functionally, calcium sensor of the mitochondrial calcium uniporter (MCU) channel, which senses calcium level via its EF-hand domains. MICU1 and MICU2 form a disulfide-linked heterodimer that stimulates and inhibits MCU activity, depending on the concentration of calcium. At low calcium levels, MICU1 occludes the pore of the MCU channel, preventing mitochondrial calcium uptake. At higher calcium levels, calcium-binding to MICU1 and MICU2 induces a conformational change that weakens MCU-MICU1 interactions and moves the MICU1-MICU2 heterodimer away from the pore, allowing calcium permeation through the MCU channel. The sequence is that of Calcium uptake protein 2, mitochondrial from Homo sapiens (Human).